A 448-amino-acid polypeptide reads, in one-letter code: Phosphoglucosamine mutase (448 aa).

Serine 99 acts as the Phosphoserine intermediate in catalysis. The Mg(2+) site is built by serine 99, aspartate 239, aspartate 241, and aspartate 243. The residue at position 99 (serine 99) is a Phosphoserine.

Belongs to the phosphohexose mutase family. It depends on Mg(2+) as a cofactor. Activated by phosphorylation.

The catalysed reaction is alpha-D-glucosamine 1-phosphate = D-glucosamine 6-phosphate. Its function is as follows. Catalyzes the conversion of glucosamine-6-phosphate to glucosamine-1-phosphate. The protein is Phosphoglucosamine mutase of Lachnoclostridium phytofermentans (strain ATCC 700394 / DSM 18823 / ISDg) (Clostridium phytofermentans).